The sequence spans 297 residues: uncharacterized protein (297 aa).

Residues 128 to 156 (RGVIVEQESEAAAEKDELESLAKVLESDF) adopt a coiled-coil conformation.

This is an uncharacterized protein from Bacillus subtilis (strain 168).